Here is a 256-residue protein sequence, read N- to C-terminus: Isoprenyl transferase (256 aa).

The active site involves D33. D33 contributes to the Mg(2+) binding site. Substrate-binding positions include G34 to R37, W38, R46, H50, and S78 to E80. N81 acts as the Proton acceptor in catalysis. Substrate contacts are provided by residues W82, R84, R201, and R207–S209. E220 contacts Mg(2+).

Belongs to the UPP synthase family. Homodimer. It depends on Mg(2+) as a cofactor.

Its function is as follows. Catalyzes the condensation of isopentenyl diphosphate (IPP) with allylic pyrophosphates generating different type of terpenoids. This is Isoprenyl transferase from Staphylococcus aureus (strain Mu50 / ATCC 700699).